The following is a 496-amino-acid chain: NADP-dependent glyceraldehyde-3-phosphate dehydrogenase (496 aa).

Substrate-binding positions include Arg116 and 169–170; that span reads NY. Residues Lys192, Thr195, and Asp230 each contribute to the NADP(+) site. Residue 245–249 coordinates NAD(+); it reads GGDTG. Glu264 serves as the catalytic Proton acceptor. A substrate-binding site is contributed by 297–299; sequence RCT. Cys298 serves as the catalytic Nucleophile. Glu391 contacts NADP(+). Residue Ser404 is modified to Phosphoserine. Position 451 (Arg451) interacts with substrate.

Belongs to the aldehyde dehydrogenase family. In terms of assembly, interacts with 14-3-3 protein when phosphorylated. This interaction is released by divalent cations. Phosphorylated in shoots and non-photosynthetic tissues, but not in leaves.

Its subcellular location is the cytoplasm. The enzyme catalyses D-glyceraldehyde 3-phosphate + NADP(+) + H2O = (2R)-3-phosphoglycerate + NADPH + 2 H(+). Insensitive to magnesium or calcium when dephosphorylated. When phosphorylated, 3-fold activation by magnesium or calcium, 2-fold activation by potassium, inhibited by ADP and AMP and insensitive to ATP or PPi. In terms of biological role, important as a means of generating NADPH for biosynthetic reactions. The polypeptide is NADP-dependent glyceraldehyde-3-phosphate dehydrogenase (GAPN) (Triticum aestivum (Wheat)).